The chain runs to 124 residues: Urocortin (124 aa).

Positions 1-25 (MRQAGRAALLAALLLLVQLCPGSSQ) are cleaved as a signal peptide. The disordered stretch occupies residues 23 to 46 (SSQRSPEAAGVQDPSLRWSPGARN). A propeptide spanning residues 26 to 82 (RSPEAAGVQDPSLRWSPGARNQGGGARALLLLLAERFPRRAGPGRLGLGTAGERPRR) is cleaved from the precursor. Residue V122 is modified to Valine amide.

The protein belongs to the sauvagine/corticotropin-releasing factor/urotensin I family. In terms of assembly, interacts with CRHR1 and CRHR2 (via their N-terminal extracellular domain). In terms of tissue distribution, keratinocytes in epidermis and the outer and inner root sheaths of hair follicles, epithelium of sebaceous and sweat glands, erector pili muscle, cutaneous blood vessel walls, cutaneous nerves and dermal mononuclear cells. Detected in plasma cells in the lamia propria in colon mucosa (at protein level). Expressed in pituitary and adrenal glands. Detected in plasma cells in the lamia propria in colon mucosa.

It is found in the secreted. Its function is as follows. Acts in vitro to stimulate the secretion of adrenocorticotropic hormone (ACTH). Binds with high affinity to CRF receptor types 1, 2-alpha, and 2-beta. Plays a role in the establishment of normal hearing thresholds. Reduces food intake and regulates ghrelin levels in gastric body and plasma. The polypeptide is Urocortin (UCN) (Homo sapiens (Human)).